The following is a 211-amino-acid chain: Interleukin-6 (211 aa).

An N-terminal signal peptide occupies residues Met1–Ala24. 2 disulfides stabilise this stretch: Cys70–Cys76 and Cys99–Cys109.

It belongs to the IL-6 superfamily. In terms of assembly, component of a hexamer of two molecules each of IL6, IL6R and IL6ST; first binds to IL6R to associate with the signaling subunit IL6ST. Interacts with IL6R (via the N-terminal ectodomain); this interaction may be affected by IL6R-binding with SORL1, hence decreasing IL6 cis signaling. Interacts with SORL1 (via the N-terminal ectodomain); this interaction leads to IL6 internalization and lysosomal degradation. May form a trimeric complex with the soluble SORL1 ectodomain and soluble IL6R receptor; this interaction might stabilize circulating IL6, hence promoting IL6 trans signaling. In terms of processing, N- and O-glycosylated. As to expression, expressed by dendritic cells and macrophages. Expressed by activated follicular B cells. Abundantly expressed in the central nervous system (CNS), particularly the hypothalamic region.

Its subcellular location is the secreted. In terms of biological role, cytokine with a wide variety of biological functions in immunity, tissue regeneration, and metabolism. Binds to IL6R, then the complex associates to the signaling subunit IL6ST/gp130 to trigger the intracellular IL6-signaling pathway. The interaction with the membrane-bound IL6R and IL6ST stimulates 'classic signaling', whereas the binding of IL6 and soluble IL6R to IL6ST stimulates 'trans-signaling'. Alternatively, 'cluster signaling' occurs when membrane-bound IL6:IL6R complexes on transmitter cells activate IL6ST receptors on neighboring receiver cells. IL6 is a potent inducer of the acute phase response. Rapid production of IL6 contributes to host defense during infection and tissue injury, but excessive IL6 synthesis is involved in disease pathology. In the innate immune response, is synthesized by myeloid cells, such as macrophages and dendritic cells, upon recognition of pathogens through toll-like receptors (TLRs) at the site of infection or tissue injury. In the adaptive immune response, is required for the differentiation of B-cells into immunoglolin-secreting cells. Plays a major role in the differentiation of CD4(+) T cell subsets. Essential factor for the development of T follicular helper (Tfh) cells that are required for the induction of germinal-center formation. Together with IL21, controls the early generation of Tfh cells and are critical for an effective antibody response to acute viral infection. Required to drive naive CD4(+) T cells to the Th17 lineage, through 'cluster signaling' by dendritic cells. Also required for proliferation of myeloma cells and the survival of plasmablast cells. Its function is as follows. Acts as an essential factor in bone homeostasis and on vessels directly or indirectly by induction of VEGF, resulting in increased angiogenesis activity and vascular permeability. Induces, through 'trans-signaling' and synergistically with IL1B and TNF, the production of VEGF. Involved in metabolic controls, is discharged into the bloodstream after muscle contraction increasing lipolysis and improving insulin resistance. 'Trans-signaling' in central nervous system regulates energy and glucose homeostasis. Mediates, through GLP-1, crosstalk between insulin-sensitive tissues, intestinal L cells and pancreatic islets to adapt to changes in insulin demand. Also acts as a myokine. Plays a protective role during liver injury, being required for maintenance of tissue regeneration. Also has a pivotal role in iron metabolism by regulating HAMP/hepcidin expression upon inflammation or bacterial infection. Through activation of IL6ST-YAP-NOTCH pathway, induces inflammation-induced epithelial regeneration. The sequence is that of Interleukin-6 from Mus musculus (Mouse).